A 778-amino-acid polypeptide reads, in one-letter code: Jhy protein homolog (778 aa).

4 disordered regions span residues 62-271 (DRIR…PKTD), 334-408 (QYES…LDTS), 631-654 (EKGK…QKRD), and 721-746 (IPKP…AGKE). Residues 118–139 (PIEDKYSDLRYDPNWKSKKEEG) are compositionally biased toward basic and acidic residues. Over residues 223–234 (SSLSPYVKSSSS) the composition is skewed to low complexity. Positions 334-344 (QYESTKSSNVP) are enriched in polar residues. Basic residues predominate over residues 358 to 371 (SRRPAKLKIRKQCK). The span at 375-389 (GLKSSTTEEVTASQG) shows a compositional bias: polar residues. Positions 390-402 (NQNNPPRQQQNQN) are enriched in low complexity. Basic residues predominate over residues 633–650 (GKKHKKRSSSKNTKLKGY). Residues 733–746 (ASKEQKNPTYAGKE) are compositionally biased toward basic and acidic residues.

Functionally, required for the normal development of cilia in brain ependymal cells lining the ventricular surfaces. In Homo sapiens (Human), this protein is Jhy protein homolog.